A 620-amino-acid chain; its full sequence is Proline--tRNA ligase (620 aa).

This sequence belongs to the class-II aminoacyl-tRNA synthetase family. ProS type 1 subfamily. Homodimer.

It is found in the cytoplasm. The catalysed reaction is tRNA(Pro) + L-proline + ATP = L-prolyl-tRNA(Pro) + AMP + diphosphate. Its function is as follows. Catalyzes the attachment of proline to tRNA(Pro) in a two-step reaction: proline is first activated by ATP to form Pro-AMP and then transferred to the acceptor end of tRNA(Pro). As ProRS can inadvertently accommodate and process non-cognate amino acids such as alanine and cysteine, to avoid such errors it has two additional distinct editing activities against alanine. One activity is designated as 'pretransfer' editing and involves the tRNA(Pro)-independent hydrolysis of activated Ala-AMP. The other activity is designated 'posttransfer' editing and involves deacylation of mischarged Ala-tRNA(Pro). The misacylated Cys-tRNA(Pro) is not edited by ProRS. The chain is Proline--tRNA ligase from Streptococcus thermophilus (strain ATCC BAA-491 / LMD-9).